We begin with the raw amino-acid sequence, 717 residues long: Ribosomal RNA large subunit methyltransferase K/L (717 aa).

Residues 44 to 155 (DAYKVCIYSY…KQFVNVFLCL (112 aa)) enclose the THUMP domain.

This sequence belongs to the methyltransferase superfamily. RlmKL family.

The protein resides in the cytoplasm. It catalyses the reaction guanosine(2445) in 23S rRNA + S-adenosyl-L-methionine = N(2)-methylguanosine(2445) in 23S rRNA + S-adenosyl-L-homocysteine + H(+). It carries out the reaction guanosine(2069) in 23S rRNA + S-adenosyl-L-methionine = N(2)-methylguanosine(2069) in 23S rRNA + S-adenosyl-L-homocysteine + H(+). Specifically methylates the guanine in position 2445 (m2G2445) and the guanine in position 2069 (m7G2069) of 23S rRNA. The polypeptide is Ribosomal RNA large subunit methyltransferase K/L (Francisella tularensis subsp. tularensis (strain WY96-3418)).